The following is a 343-amino-acid chain: MSDSETEETKISTEPVENAWAMKIPSFKPEDNPHGMVEESSFATLFPKYRERYLKEVWPLVEQCVAEHHLKAELDLVEGSMVVKTSRKTWDPYIIIKARDMIKLMARSVPFEQAKRVLQDDIGCDIIKIGNLVHKKEKFVKRRQRLIGPNGATLKSIELLTDCYVLVQGNTVAALGPYKGLQQVRDIVVETMNNVHPIYNIKALMIKRELMKDPRLANEDWSRFLPKFKNKNISKRKQPKVKKAKKEYTPFPPAQPESKVGKQLASGEYFLNKEQKQAKRQQERSAKQADAAKRQDERRNKDFVPPTEEASSSRKRSSAENASSKVDVKALKAKLLKANKKKV.

In terms of domain architecture, KH spans 125 to 193 (DIIKIGNLVH…VRDIVVETMN (69 aa)). Residues 232 to 245 (NISKRKQPKVKKAK) show a composition bias toward basic residues. Positions 232-343 (NISKRKQPKV…KLLKANKKKV (112 aa)) are disordered. The stretch at 270 to 302 (FLNKEQKQAKRQQERSAKQADAAKRQDERRNKD) forms a coiled coil. The span at 271 to 302 (LNKEQKQAKRQQERSAKQADAAKRQDERRNKD) shows a compositional bias: basic and acidic residues. Residues 331 to 343 (LKAKLLKANKKKV) are compositionally biased toward basic residues.

The protein belongs to the KRR1 family. In terms of assembly, monomer. Component of the ribosomal small subunit (SSU) processome.

Its subcellular location is the nucleus. The protein localises to the nucleolus. Functionally, required for 40S ribosome biogenesis. Involved in nucleolar processing of pre-18S ribosomal RNA and ribosome assembly. Binds to RNA. Required for female germline development, cell viability during eye development and for survival of dividing cells and epithelial cells during early wing disk development. The sequence is that of KRR1 small subunit processome component homolog from Drosophila ananassae (Fruit fly).